A 555-amino-acid chain; its full sequence is Glutamine--tRNA ligase (555 aa).

The 'HIGH' region motif lies at 35 to 45 (PEPNGYLHIGH). ATP-binding positions include 36-38 (EPN) and 42-48 (HIGHAKS). Residues Asp-68 and Tyr-213 each coordinate L-glutamine. ATP contacts are provided by residues Thr-232 and 262-263 (RL). The 'KMSKS' region motif lies at 269–273 (ITSKR).

Belongs to the class-I aminoacyl-tRNA synthetase family. In terms of assembly, monomer.

It is found in the cytoplasm. The catalysed reaction is tRNA(Gln) + L-glutamine + ATP = L-glutaminyl-tRNA(Gln) + AMP + diphosphate. This Stutzerimonas stutzeri (strain A1501) (Pseudomonas stutzeri) protein is Glutamine--tRNA ligase.